A 171-amino-acid chain; its full sequence is Co-chaperone protein HscB homolog (171 aa).

Residues 2–74 (NYFELFGLPI…LRRAEYLLSL (73 aa)) form the J domain.

This sequence belongs to the HscB family. In terms of assembly, interacts with HscA and stimulates its ATPase activity.

Functionally, co-chaperone involved in the maturation of iron-sulfur cluster-containing proteins. Seems to help targeting proteins to be folded toward HscA. This is Co-chaperone protein HscB homolog from Vibrio cholerae serotype O1 (strain M66-2).